Reading from the N-terminus, the 304-residue chain is Plasmodesmata-located protein 3 (304 aa).

A signal peptide spans 1–26; the sequence is MGFYSLKQLLLLYIIIMALFSDLKLA. Topologically, residues 27-272 are extracellular; that stretch reads KSSSPEYTNL…SSSSGTTGKT (246 aa). 2 consecutive Gnk2-homologous domains span residues 34–138 and 143–242; these read TNLI…ISGF and GMEL…FYPN. Intrachain disulfides connect Cys41/Cys116, Cys92/Cys101, Cys104/Cys129, Cys151/Cys220, Cys196/Cys205, and Cys208/Cys233. The helical transmembrane segment at 273–293 threads the bilayer; the sequence is VAIIVGGTAGVGFLVICLLFV. A necessary and sufficient for plasmodesmal targeting region spans residues 273–293; sequence VAIIVGGTAGVGFLVICLLFV. At 294-304 the chain is on the cytoplasmic side; that stretch reads KNLMKKKYDDY.

Belongs to the cysteine-rich repeat secretory protein family. Plasmodesmata-located proteins (PDLD) subfamily. (Microbial infection) Interacts with Grapevine fanleaf virus (GFLV) 2B-MP. Highly expressed in inflorescence pedacel and shoot apex. Expressed in the outermost L1 layer of the shoot apical meristem and in the epidermis of bulging floral primordia. Within the L1, expression was restricted to the peripheral zone (at protein level).

It is found in the cell membrane. Its subcellular location is the cell junction. The protein localises to the plasmodesma. In terms of biological role, modulates cell-to-cell trafficking. This Arabidopsis thaliana (Mouse-ear cress) protein is Plasmodesmata-located protein 3.